The following is a 600-amino-acid chain: Prostaglandin G/H synthase 1 (600 aa).

The N-terminal stretch at 1–24 (MSRQGISLRFPLLLLLLSPSPVLP) is a signal peptide. Residues 32–70 (PVNPCCYYPCQHQGICVRFGLDRYQCDCTRTGYYGPNCT) enclose the EGF-like domain. 4 cysteine pairs are disulfide-bonded: Cys36-Cys47, Cys37-Cys159, Cys41-Cys57, and Cys59-Cys69. Asn68, Asn104, and Asn144 each carry an N-linked (GlcNAc...) asparagine glycan. The active-site Proton acceptor is His207. Tyr385 functions as the For cyclooxygenase activity in the catalytic mechanism. Position 388 (His388) interacts with heme b. An N-linked (GlcNAc...) asparagine glycan is attached at Asn410. A disulfide bridge connects residues Cys569 and Cys575.

The protein belongs to the prostaglandin G/H synthase family. Homodimer. It depends on heme b as a cofactor.

Its subcellular location is the microsome membrane. It localises to the endoplasmic reticulum membrane. The enzyme catalyses (5Z,8Z,11Z,14Z)-eicosatetraenoate + AH2 + 2 O2 = prostaglandin H2 + A + H2O. The catalysed reaction is (5Z,8Z,11Z,14Z)-eicosatetraenoate + 2 O2 = prostaglandin G2. It carries out the reaction prostaglandin G2 + AH2 = prostaglandin H2 + A + H2O. It catalyses the reaction (9Z,12Z)-octadecadienoate + AH2 + O2 = (9R)-hydroxy-(10E,12Z)-octadecadienoate + A + H2O. The enzyme catalyses (9Z,12Z)-octadecadienoate + AH2 + O2 = (9S)-hydroxy-(10E,12Z)-octadecadienoate + A + H2O. The catalysed reaction is (9Z,12Z)-octadecadienoate + AH2 + O2 = (13S)-hydroxy-(9Z,11E)-octadecadienoate + A + H2O. It carries out the reaction (9Z,12Z)-octadecadienoate + AH2 + O2 = (13R)-hydroxy-(9Z,11E)-octadecadienoate + A + H2O. It functions in the pathway lipid metabolism; prostaglandin biosynthesis. The cyclooxygenase activity is inhibited by nonsteroidal anti-inflammatory drugs (NSAIDs) including ibuprofen, flurbiprofen, ketoprofen, naproxen, flurbiprofen, anirolac, fenclofenac and diclofenac. In terms of biological role, dual cyclooxygenase and peroxidase that plays an important role in the biosynthesis pathway of prostanoids, a class of C20 oxylipins mainly derived from arachidonate ((5Z,8Z,11Z,14Z)-eicosatetraenoate, AA, C20:4(n-6)), with a particular role in the inflammatory response. The cyclooxygenase activity oxygenates AA to the hydroperoxy endoperoxide prostaglandin G2 (PGG2), and the peroxidase activity reduces PGG2 to the hydroxy endoperoxide prostaglandin H2 (PGH2), the precursor of all 2-series prostaglandins and thromboxanes. This complex transformation is initiated by abstraction of hydrogen at carbon 13 (with S-stereochemistry), followed by insertion of molecular O2 to form the endoperoxide bridge between carbon 9 and 11 that defines prostaglandins. The insertion of a second molecule of O2 (bis-oxygenase activity) yields a hydroperoxy group in PGG2 that is then reduced to PGH2 by two electrons. Involved in the constitutive production of prostanoids in particular in the stomach and platelets. In gastric epithelial cells, it is a key step in the generation of prostaglandins, such as prostaglandin E2 (PGE2), which plays an important role in cytoprotection. In platelets, it is involved in the generation of thromboxane A2 (TXA2), which promotes platelet activation and aggregation, vasoconstriction and proliferation of vascular smooth muscle cells. Can also use linoleate (LA, (9Z,12Z)-octadecadienoate, C18:2(n-6)) as substrate and produce hydroxyoctadecadienoates (HODEs) in a regio- and stereospecific manner, being (9R)-HODE ((9R)-hydroxy-(10E,12Z)-octadecadienoate) and (13S)-HODE ((13S)-hydroxy-(9Z,11E)-octadecadienoate) its major products. The polypeptide is Prostaglandin G/H synthase 1 (PTGS1) (Bos taurus (Bovine)).